Consider the following 215-residue polypeptide: Protein-L-isoaspartate O-methyltransferase (215 aa).

Ser62 is an active-site residue.

It belongs to the methyltransferase superfamily. L-isoaspartyl/D-aspartyl protein methyltransferase family.

It localises to the cytoplasm. The enzyme catalyses [protein]-L-isoaspartate + S-adenosyl-L-methionine = [protein]-L-isoaspartate alpha-methyl ester + S-adenosyl-L-homocysteine. In terms of biological role, catalyzes the methyl esterification of L-isoaspartyl residues in peptides and proteins that result from spontaneous decomposition of normal L-aspartyl and L-asparaginyl residues. It plays a role in the repair and/or degradation of damaged proteins. The chain is Protein-L-isoaspartate O-methyltransferase from Bradyrhizobium sp. (strain BTAi1 / ATCC BAA-1182).